The sequence spans 419 residues: MIYLDHNATTPVDPRVVEVMLPLFTERFANPASKHAPGQEATRIVERARREVASLAGARPREIVFTSGATEAANLAIGGVLATAEPGRRRILVGATEHPAVLGAADAAVSAGSAVSADGTTAAERIAVHPDGTVDVDDLRRRLGPDVALVAVMAANNETGAVNDPRPLVEAARSAGRCCCADVTQALGRVPVEFERTGVDLAVSSAHKLYGPKGVGALIASKDAWSRLAPRVHGGGQERGLRAGTLNTAGIAGFGAAARIAAESMADDGTRQRALVALLTELLVKRLGPGAVELNGPVRARLPNTVNLRFVGAGADEVQACAPRVAISAGSACSGGGDEPSHVLRAMGRTATEARESLRFSLGRATTTEEIRTAADLVARAVLRVRSLSQSTPIQDEVRDDNRASSNSLNRGSAASKES.

Residues 69–70 (AT), asparagine 157, glutamine 185, and 205–207 (SAH) each bind pyridoxal 5'-phosphate. Lysine 208 bears the N6-(pyridoxal phosphate)lysine mark. A pyridoxal 5'-phosphate-binding site is contributed by threonine 245. Residue cysteine 333 is the Cysteine persulfide intermediate of the active site. Cysteine 333 is a [2Fe-2S] cluster binding site. The disordered stretch occupies residues 392–419 (TPIQDEVRDDNRASSNSLNRGSAASKES). Over residues 404 to 413 (ASSNSLNRGS) the composition is skewed to polar residues.

The protein belongs to the class-V pyridoxal-phosphate-dependent aminotransferase family. NifS/IscS subfamily. As to quaternary structure, homodimer. Requires pyridoxal 5'-phosphate as cofactor.

It catalyses the reaction (sulfur carrier)-H + L-cysteine = (sulfur carrier)-SH + L-alanine. Its function is as follows. Catalyzes the removal of elemental sulfur atoms from cysteine to produce alanine. Seems to participate in the biosynthesis of the nitrogenase metalloclusters by providing the inorganic sulfur required for the Fe-S core formation. The sequence is that of Cysteine desulfurase from Frankia sp. (strain EuIK1).